A 358-amino-acid polypeptide reads, in one-letter code: Vanillin synthase (358 aa).

The signal sequence occupies residues 1 to 21 (MARLLLLLVGVLIACAAGARA). A propeptide spans 22–140 (GSEFLAEDNP…RGNHKLTSAI (119 aa)) (activation peptide). An N-linked (GlcNAc...) asparagine glycan is attached at Asn-125. 2 cysteine pairs are disulfide-bonded: Cys-162/Cys-205 and Cys-196/Cys-238. Cys-165 is an active-site residue. A glycan (N-linked (GlcNAc...) asparagine) is linked at Asn-254. Cys-296 and Cys-346 are disulfide-bonded. Catalysis depends on residues His-305 and Asn-325.

This sequence belongs to the peptidase C1 family.

The enzyme catalyses (E)-ferulate + H2O = vanillin + acetate. It catalyses the reaction 4-O-beta-D-glucosyl-trans-ferulate + H2O = 4-O-beta-D-glucosyl-vanillin + acetate. The protein operates within aromatic compound metabolism; phenylpropanoid biosynthesis. Its function is as follows. Involved in the biosynthesis of vanillin and derivative natural products. Catalyzes the double carbon bond cleavage of ferulic acid to vanillin and of respective glucosides. The protein is Vanillin synthase of Glechoma hederacea (Ground-ivy).